Consider the following 396-residue polypeptide: Elongation factor Tu (396 aa).

In terms of domain architecture, tr-type G spans 10 to 205; sequence KPHVNIGTIG…ACDDNIPDPV (196 aa). A G1 region spans residues 19 to 26; sequence GHVDHGKT. Residue 19–26 participates in GTP binding; the sequence is GHVDHGKT. Thr-26 lines the Mg(2+) pocket. Residues 62–66 are G2; it reads GITIN. Residues 83–86 are G3; that stretch reads DAPG. GTP is bound by residues 83 to 87 and 138 to 141; these read DAPGH and NKCD. Residues 138-141 are G4; that stretch reads NKCD. The interval 175 to 177 is G5; sequence SAL.

This sequence belongs to the TRAFAC class translation factor GTPase superfamily. Classic translation factor GTPase family. EF-Tu/EF-1A subfamily. As to quaternary structure, monomer.

The protein resides in the cytoplasm. It carries out the reaction GTP + H2O = GDP + phosphate + H(+). In terms of biological role, GTP hydrolase that promotes the GTP-dependent binding of aminoacyl-tRNA to the A-site of ribosomes during protein biosynthesis. This chain is Elongation factor Tu, found in Corynebacterium glutamicum (strain ATCC 13032 / DSM 20300 / JCM 1318 / BCRC 11384 / CCUG 27702 / LMG 3730 / NBRC 12168 / NCIMB 10025 / NRRL B-2784 / 534).